The chain runs to 593 residues: Epidermal growth factor receptor kinase substrate 8-like protein 3 (593 aa).

One can recognise a PTB domain in the interval 28–155 (QHRVEHLMTC…ALEEELEQRP (128 aa)). Disordered regions lie at residues 149–171 (EELEQRPRLGGLQPGQDRWRGPA), 184–239 (LEPG…ERDE), and 374–451 (ADWT…PAQP). The residue at position 231 (S231) is a Phosphoserine. Residues 386-401 (PTFSDDWQLPEPSSQA) are compositionally biased toward polar residues. Residues 425-435 (PQEKTHNHDPQ) show a composition bias toward basic and acidic residues. Residues 450–509 (QPALKMQVLYEFEARNPRELTVVQGEKLEVLDHSKRWWLVKNEAGRSGYIPSNILEPLQP) form the SH3 domain.

It belongs to the EPS8 family. Interacts with ABI1. Part of a complex that contains SOS1, ABI1 and EPS8L2. Interacts with FASLG.

The protein localises to the cytoplasm. The polypeptide is Epidermal growth factor receptor kinase substrate 8-like protein 3 (EPS8L3) (Homo sapiens (Human)).